We begin with the raw amino-acid sequence, 255 residues long: Uracil-DNA glycosylase (255 aa).

The Proton acceptor role is filled by aspartate 90.

This sequence belongs to the uracil-DNA glycosylase (UDG) superfamily. UNG family.

The protein resides in the host nucleus. It carries out the reaction Hydrolyzes single-stranded DNA or mismatched double-stranded DNA and polynucleotides, releasing free uracil.. In terms of biological role, excises uracil residues from the DNA which can arise as a result of misincorporation of dUMP residues by DNA polymerase or deamination of cytosines. Therefore may reduce deleterious uracil incorporation into the viral genome, particularly in terminally differentiated cells which lack DNA repair enzymes. The protein is Uracil-DNA glycosylase of Equine herpesvirus 2 (strain 86/87) (EHV-2).